Reading from the N-terminus, the 446-residue chain is Ribosomal protein uS12 methylthiotransferase RimO (446 aa).

An MTTase N-terminal domain is found at 9 to 121 (PKVGFVSLGC…VLDAIHAALP (113 aa)). The [4Fe-4S] cluster site is built by cysteine 18, cysteine 54, cysteine 83, cysteine 152, cysteine 156, and cysteine 159. Positions 138–375 (LTPPHYAYLK…MAVQEAISRQ (238 aa)) constitute a Radical SAM core domain. The TRAM domain maps to 378–445 (QRRVGQRQRV…AHDLYGMVVS (68 aa)).

Belongs to the methylthiotransferase family. RimO subfamily. [4Fe-4S] cluster serves as cofactor.

Its subcellular location is the cytoplasm. It carries out the reaction L-aspartate(89)-[ribosomal protein uS12]-hydrogen + (sulfur carrier)-SH + AH2 + 2 S-adenosyl-L-methionine = 3-methylsulfanyl-L-aspartate(89)-[ribosomal protein uS12]-hydrogen + (sulfur carrier)-H + 5'-deoxyadenosine + L-methionine + A + S-adenosyl-L-homocysteine + 2 H(+). In terms of biological role, catalyzes the methylthiolation of an aspartic acid residue of ribosomal protein uS12. This Acidithiobacillus ferrooxidans (strain ATCC 23270 / DSM 14882 / CIP 104768 / NCIMB 8455) (Ferrobacillus ferrooxidans (strain ATCC 23270)) protein is Ribosomal protein uS12 methylthiotransferase RimO.